Here is a 325-residue protein sequence, read N- to C-terminus: Glutarate 2-hydroxylase (325 aa).

Positions 160, 162, and 292 each coordinate Fe cation.

Belongs to the glutarate hydroxylase family. In terms of assembly, homotetramer. The cofactor is Fe(2+).

It catalyses the reaction glutarate + 2-oxoglutarate + O2 = (S)-2-hydroxyglutarate + succinate + CO2. It participates in amino-acid degradation. Functionally, acts as an alpha-ketoglutarate-dependent dioxygenase catalyzing hydroxylation of glutarate (GA) to L-2-hydroxyglutarate (L2HG). Functions in a L-lysine degradation pathway that proceeds via cadaverine, glutarate and L-2-hydroxyglutarate. This is Glutarate 2-hydroxylase from Salmonella typhimurium (strain SL1344).